A 268-amino-acid chain; its full sequence is Phosphatidylglycerol--prolipoprotein diacylglyceryl transferase (268 aa).

The next 4 helical transmembrane spans lie at 14 to 34, 57 to 77, 90 to 110, and 117 to 137; these read LGPI…FAGW, LTFY…IIFY, FFLW…LIAF, and IGAN…IGLG. A 1,2-diacyl-sn-glycero-3-phospho-(1'-sn-glycerol) is bound at residue Arg-140. Transmembrane regions (helical) follow at residues 174–194, 200–220, and 238–258; these read QLFE…LVTI, YLVL…CEFF, and GQIL…AVFI.

Belongs to the Lgt family.

The protein localises to the cell inner membrane. It catalyses the reaction L-cysteinyl-[prolipoprotein] + a 1,2-diacyl-sn-glycero-3-phospho-(1'-sn-glycerol) = an S-1,2-diacyl-sn-glyceryl-L-cysteinyl-[prolipoprotein] + sn-glycerol 1-phosphate + H(+). The protein operates within protein modification; lipoprotein biosynthesis (diacylglyceryl transfer). Its function is as follows. Catalyzes the transfer of the diacylglyceryl group from phosphatidylglycerol to the sulfhydryl group of the N-terminal cysteine of a prolipoprotein, the first step in the formation of mature lipoproteins. The chain is Phosphatidylglycerol--prolipoprotein diacylglyceryl transferase from Francisella tularensis subsp. mediasiatica (strain FSC147).